Reading from the N-terminus, the 387-residue chain is 3-ketoacyl-CoA thiolase (387 aa).

C91 (acyl-thioester intermediate) is an active-site residue. Catalysis depends on proton acceptor residues H343 and C373.

This sequence belongs to the thiolase-like superfamily. Thiolase family. Heterotetramer of two alpha chains (FadB) and two beta chains (FadA).

It localises to the cytoplasm. The catalysed reaction is an acyl-CoA + acetyl-CoA = a 3-oxoacyl-CoA + CoA. It participates in lipid metabolism; fatty acid beta-oxidation. Catalyzes the final step of fatty acid oxidation in which acetyl-CoA is released and the CoA ester of a fatty acid two carbons shorter is formed. This chain is 3-ketoacyl-CoA thiolase, found in Shewanella frigidimarina (strain NCIMB 400).